The chain runs to 284 residues: L-ribulose-5-phosphate 3-epimerase UlaE (284 aa).

Belongs to the L-ribulose-5-phosphate 3-epimerase family.

The enzyme catalyses L-ribulose 5-phosphate = L-xylulose 5-phosphate. The protein operates within cofactor degradation; L-ascorbate degradation; D-xylulose 5-phosphate from L-ascorbate: step 3/4. Its function is as follows. Catalyzes the isomerization of L-xylulose-5-phosphate to L-ribulose-5-phosphate. Is involved in the anaerobic L-ascorbate utilization. In Salmonella dublin (strain CT_02021853), this protein is L-ribulose-5-phosphate 3-epimerase UlaE.